The primary structure comprises 158 residues: Endoribonuclease YbeY (158 aa).

Histidine 119, histidine 123, and histidine 129 together coordinate Zn(2+).

Belongs to the endoribonuclease YbeY family. Zn(2+) is required as a cofactor.

It is found in the cytoplasm. In terms of biological role, single strand-specific metallo-endoribonuclease involved in late-stage 70S ribosome quality control and in maturation of the 3' terminus of the 16S rRNA. The polypeptide is Endoribonuclease YbeY (Shewanella sediminis (strain HAW-EB3)).